The primary structure comprises 868 residues: DNA topoisomerase 1 (868 aa).

Residues 3–148 form the Toprim domain; sequence KSLVIVESPA…RFSRVVFNEI (146 aa). Residues glutamate 9 and aspartate 117 each contribute to the Mg(2+) site. The Topo IA-type catalytic domain occupies 164–581; sequence NMDRVNAQQT…QFFKDFSSQL (418 aa). The interaction with DNA stretch occupies residues 198-203; it reads SAGRVQ. Tyrosine 325 acts as the O-(5'-phospho-DNA)-tyrosine intermediate in catalysis. 3 C4-type zinc fingers span residues 605 to 636, 667 to 694, and 716 to 739; these read CPTCGRNMAIRTASTGVFLGCTGYALPPKERC, CTKCGTAMDSYVIDAHRKIHICGNNPNC, and CDKCGADMHLKLGRFGKYMGCTNC.

It belongs to the type IA topoisomerase family. Monomer. Requires Mg(2+) as cofactor.

The enzyme catalyses ATP-independent breakage of single-stranded DNA, followed by passage and rejoining.. Releases the supercoiling and torsional tension of DNA, which is introduced during the DNA replication and transcription, by transiently cleaving and rejoining one strand of the DNA duplex. Introduces a single-strand break via transesterification at a target site in duplex DNA. The scissile phosphodiester is attacked by the catalytic tyrosine of the enzyme, resulting in the formation of a DNA-(5'-phosphotyrosyl)-enzyme intermediate and the expulsion of a 3'-OH DNA strand. The free DNA strand then undergoes passage around the unbroken strand, thus removing DNA supercoils. Finally, in the religation step, the DNA 3'-OH attacks the covalent intermediate to expel the active-site tyrosine and restore the DNA phosphodiester backbone. In Haemophilus influenzae (strain ATCC 51907 / DSM 11121 / KW20 / Rd), this protein is DNA topoisomerase 1.